Consider the following 244-residue polypeptide: 1-(5-phosphoribosyl)-5-[(5-phosphoribosylamino)methylideneamino] imidazole-4-carboxamide isomerase (244 aa).

Catalysis depends on Asp-10, which acts as the Proton acceptor. The active-site Proton donor is the Asp-132.

The protein belongs to the HisA/HisF family.

The protein resides in the cytoplasm. It carries out the reaction 1-(5-phospho-beta-D-ribosyl)-5-[(5-phospho-beta-D-ribosylamino)methylideneamino]imidazole-4-carboxamide = 5-[(5-phospho-1-deoxy-D-ribulos-1-ylimino)methylamino]-1-(5-phospho-beta-D-ribosyl)imidazole-4-carboxamide. It functions in the pathway amino-acid biosynthesis; L-histidine biosynthesis; L-histidine from 5-phospho-alpha-D-ribose 1-diphosphate: step 4/9. This chain is 1-(5-phosphoribosyl)-5-[(5-phosphoribosylamino)methylideneamino] imidazole-4-carboxamide isomerase, found in Stenotrophomonas maltophilia (strain K279a).